A 107-amino-acid chain; its full sequence is Potassium voltage-gated channel subfamily E member 3 (107 aa).

3 N-linked (GlcNAc...) asparagine glycosylation sites follow: Asn-5, Asn-22, and Asn-45. The tract at residues 31 to 54 (CRPGPGPGSGTGPDNQTEDHRASL) is disordered. A helical transmembrane segment spans residues 61 to 81 (SYMYILFVMFLFAVTVGSLIL). Residues 72 to 83 (FAVTVGSLILGY) are interaction with KCNQ1. Topologically, residues 82–103 (GYTRSRKVDKRSDPYHVYIKNR) are cytoplasmic.

This sequence belongs to the potassium channel KCNE family. Interacts with KCNB1. Interacts with KCNC2. Associates with KCNC4/Kv3.4. Interacts with KCNQ1; associates with a KCNQ1:KCNE3 stoichiometry of 4:4; produces a current with nearly instantaneous activation with a linear current-voltage relationship and alters membrane raft localization; affects KCNQ1 structure and gating properties.

Its subcellular location is the cell membrane. It is found in the cytoplasm. The protein resides in the perikaryon. The protein localises to the cell projection. It localises to the dendrite. Its subcellular location is the membrane raft. Ancillary protein that functions as a regulatory subunit of the voltage-gated potassium (Kv) channel complex composed of pore-forming and potassium-conducting alpha subunits and of regulatory beta subunits. KCNE3 beta subunit modulates the gating kinetics and enhances stability of the channel complex. Alters the gating of the delayed rectifier Kv channel containing KCNB1 alpha subunit. Associates with KCNC4/Kv3.4 alpha subunit to form the subthreshold Kv channel in skeletal muscle and to establish the resting membrane potential (RMP) in muscle cells. Association with KCNQ1/KCLQT1 alpha subunit may form the intestinal cAMP-stimulated potassium channel involved in chloride secretion that produces a current with nearly instantaneous activation with a linear current-voltage relationship. In Rattus norvegicus (Rat), this protein is Potassium voltage-gated channel subfamily E member 3.